The chain runs to 630 residues: GTPase-activating protein NEL1 (630 aa).

Belongs to the SEC23/SEC24 family. SEC23 subfamily.

It is found in the cytoplasm. The protein localises to the nucleus. Its function is as follows. Acts as a GTPase-activating protein (GAP) for SAR1. Contrary to its SEC23 homolog, NEL1 does not associate with SEC24 and its homologs, nor does it associate with the COPII components, suggesting that it is unlikely that NEL1 functions as a structural component of the vesicle coat machinery. May function as a signaling molecule. The polypeptide is GTPase-activating protein NEL1 (Saccharomyces cerevisiae (strain ATCC 204508 / S288c) (Baker's yeast)).